The chain runs to 271 residues: Glutamate racemase 3 (271 aa).

Substrate-binding positions include D15 to S16 and Y47 to G48. Residue C78 is the Proton donor/acceptor of the active site. N79 to T80 serves as a coordination point for substrate. The active-site Proton donor/acceptor is C185. A substrate-binding site is contributed by T186 to H187.

Belongs to the aspartate/glutamate racemases family.

It carries out the reaction L-glutamate = D-glutamate. Its pathway is cell wall biogenesis; peptidoglycan biosynthesis. In terms of biological role, provides the (R)-glutamate required for cell wall biosynthesis. This Caldanaerobacter subterraneus subsp. tengcongensis (strain DSM 15242 / JCM 11007 / NBRC 100824 / MB4) (Thermoanaerobacter tengcongensis) protein is Glutamate racemase 3.